The sequence spans 249 residues: Hydroxyacylglutathione hydrolase (249 aa).

7 residues coordinate Zn(2+): His53, His55, Asp57, His58, His110, Asp127, and His165.

It belongs to the metallo-beta-lactamase superfamily. Glyoxalase II family. Monomer. Requires Zn(2+) as cofactor.

The catalysed reaction is an S-(2-hydroxyacyl)glutathione + H2O = a 2-hydroxy carboxylate + glutathione + H(+). The protein operates within secondary metabolite metabolism; methylglyoxal degradation; (R)-lactate from methylglyoxal: step 2/2. Its function is as follows. Thiolesterase that catalyzes the hydrolysis of S-D-lactoyl-glutathione to form glutathione and D-lactic acid. The protein is Hydroxyacylglutathione hydrolase of Hamiltonella defensa subsp. Acyrthosiphon pisum (strain 5AT).